The chain runs to 371 residues: 4-hydroxy-3-methylbut-2-en-1-yl diphosphate synthase (flavodoxin) (371 aa).

The [4Fe-4S] cluster site is built by C272, C275, C307, and E314.

It belongs to the IspG family. The cofactor is [4Fe-4S] cluster.

The enzyme catalyses (2E)-4-hydroxy-3-methylbut-2-enyl diphosphate + oxidized [flavodoxin] + H2O + 2 H(+) = 2-C-methyl-D-erythritol 2,4-cyclic diphosphate + reduced [flavodoxin]. It participates in isoprenoid biosynthesis; isopentenyl diphosphate biosynthesis via DXP pathway; isopentenyl diphosphate from 1-deoxy-D-xylulose 5-phosphate: step 5/6. In terms of biological role, converts 2C-methyl-D-erythritol 2,4-cyclodiphosphate (ME-2,4cPP) into 1-hydroxy-2-methyl-2-(E)-butenyl 4-diphosphate. The sequence is that of 4-hydroxy-3-methylbut-2-en-1-yl diphosphate synthase (flavodoxin) from Pseudomonas aeruginosa (strain LESB58).